A 273-amino-acid chain; its full sequence is Undecaprenyl-diphosphatase (273 aa).

8 helical membrane passes run 3-23 (IIEL…EFAP), 48-68 (GANT…VVVF), 89-109 (LTLM…VLFE), 116-136 (LFST…MIAA), 151-171 (ITYK…WPGF), 192-212 (ADFT…ISLL), 225-245 (FFVV…RFFL), and 253-273 (LVPF…VYFA).

It belongs to the UppP family.

Its subcellular location is the cell membrane. The enzyme catalyses di-trans,octa-cis-undecaprenyl diphosphate + H2O = di-trans,octa-cis-undecaprenyl phosphate + phosphate + H(+). In terms of biological role, catalyzes the dephosphorylation of undecaprenyl diphosphate (UPP). Confers resistance to bacitracin. This is Undecaprenyl-diphosphatase from Anoxybacillus flavithermus (strain DSM 21510 / WK1).